Here is a 189-residue protein sequence, read N- to C-terminus: Crossover junction endodeoxyribonuclease RuvC (189 aa).

Catalysis depends on residues aspartate 7, glutamate 68, and aspartate 141. Mg(2+) is bound by residues aspartate 7, glutamate 68, and aspartate 141.

The protein belongs to the RuvC family. As to quaternary structure, homodimer which binds Holliday junction (HJ) DNA. The HJ becomes 2-fold symmetrical on binding to RuvC with unstacked arms; it has a different conformation from HJ DNA in complex with RuvA. In the full resolvosome a probable DNA-RuvA(4)-RuvB(12)-RuvC(2) complex forms which resolves the HJ. Mg(2+) serves as cofactor.

It localises to the cytoplasm. It carries out the reaction Endonucleolytic cleavage at a junction such as a reciprocal single-stranded crossover between two homologous DNA duplexes (Holliday junction).. In terms of biological role, the RuvA-RuvB-RuvC complex processes Holliday junction (HJ) DNA during genetic recombination and DNA repair. Endonuclease that resolves HJ intermediates. Cleaves cruciform DNA by making single-stranded nicks across the HJ at symmetrical positions within the homologous arms, yielding a 5'-phosphate and a 3'-hydroxyl group; requires a central core of homology in the junction. The consensus cleavage sequence is 5'-(A/T)TT(C/G)-3'. Cleavage occurs on the 3'-side of the TT dinucleotide at the point of strand exchange. HJ branch migration catalyzed by RuvA-RuvB allows RuvC to scan DNA until it finds its consensus sequence, where it cleaves and resolves the cruciform DNA. The polypeptide is Crossover junction endodeoxyribonuclease RuvC (Nocardia farcinica (strain IFM 10152)).